Consider the following 581-residue polypeptide: 2-isopropylmalate synthase (581 aa).

The 275-residue stretch at 32-306 (PQWCAVDLRD…DPQLDFSDIK (275 aa)) folds into the Pyruvate carboxyltransferase domain. Mg(2+)-binding residues include Asp41, His245, His247, and Asn281. Residues 455 to 581 (RSAPVEQIAL…KHQQLQNGGV (127 aa)) are regulatory domain.

This sequence belongs to the alpha-IPM synthase/homocitrate synthase family. LeuA type 2 subfamily. In terms of assembly, homodimer. The cofactor is Mg(2+).

It is found in the cytoplasm. The catalysed reaction is 3-methyl-2-oxobutanoate + acetyl-CoA + H2O = (2S)-2-isopropylmalate + CoA + H(+). Its pathway is amino-acid biosynthesis; L-leucine biosynthesis; L-leucine from 3-methyl-2-oxobutanoate: step 1/4. In terms of biological role, catalyzes the condensation of the acetyl group of acetyl-CoA with 3-methyl-2-oxobutanoate (2-ketoisovalerate) to form 3-carboxy-3-hydroxy-4-methylpentanoate (2-isopropylmalate). This is 2-isopropylmalate synthase from Corynebacterium efficiens (strain DSM 44549 / YS-314 / AJ 12310 / JCM 11189 / NBRC 100395).